The chain runs to 108 residues: Phosphocarrier protein HPr (108 aa).

The HPr domain maps to 21 to 108 (ELQATCIVKN…DAFSSGFGEL (88 aa)). The active-site Pros-phosphohistidine intermediate is H35.

The protein belongs to the HPr family.

Its subcellular location is the cytoplasm. General (non sugar-specific) component of the phosphoenolpyruvate-dependent sugar phosphotransferase system (sugar PTS). This major carbohydrate active-transport system catalyzes the phosphorylation of incoming sugar substrates concomitantly with their translocation across the cell membrane. The phosphoryl group from phosphoenolpyruvate (PEP) is transferred to the phosphoryl carrier protein HPr by enzyme I. Phospho-HPr then transfers it to the PTS EIIA domain. The chain is Phosphocarrier protein HPr (ptsH) from Chlamydia pneumoniae (Chlamydophila pneumoniae).